A 304-amino-acid polypeptide reads, in one-letter code: Serine/threonine-protein phosphatase PP1 isozyme 3 (304 aa).

Mn(2+)-binding residues include D61, H63, D89, and N121. Catalysis depends on H122, which acts as the Proton donor. Mn(2+) contacts are provided by H170 and H245.

This sequence belongs to the PPP phosphatase family. PP-1 subfamily. Mn(2+) serves as cofactor.

The enzyme catalyses O-phospho-L-seryl-[protein] + H2O = L-seryl-[protein] + phosphate. The catalysed reaction is O-phospho-L-threonyl-[protein] + H2O = L-threonyl-[protein] + phosphate. The polypeptide is Serine/threonine-protein phosphatase PP1 isozyme 3 (NPP3) (Nicotiana tabacum (Common tobacco)).